Here is a 205-residue protein sequence, read N- to C-terminus: G-protein coupled receptor (205 aa).

The next 5 helical transmembrane spans lie at 40-60, 71-91, 107-127, 151-171, and 185-205; these read GITLTASVPMIIIVITTMILY, FYVITLFASDFVLMWCVFFMT, LVYFIYHAVCSYSISMLAIIA, IGILLLASSMCAIPTALFVQI, and LSSPKAYELFLAVKIVFSFIW. Cysteines 105 and 181 form a disulfide.

Belongs to the G-protein coupled receptor 1 family.

Its subcellular location is the host membrane. This chain is G-protein coupled receptor (U12), found in Human herpesvirus 6B (strain Z29) (HHV-6 variant B).